Reading from the N-terminus, the 264-residue chain is MSKITVSTLNKMKAEKNKITALTAYDASFAKLFHDNGVEVILVGDSLGMVLQGGDDTLGVTNQDIAYHTRCVRAGSRELFVIADMPFMTYSSPNDTCKNAAELMRAGANMVKLEGGEWLFESIEALTQQGIPVCGHLGLTPQSVHVFGGFKVQGRAEEQALKIIADAKALEAAGAQLLVLECIPSALAKRVTDALTIPTIGIGAGNTTDGQILVMHDLVGISAGFIPKFSKNFLLETGNMPEAVKKYCTDVKSGAFPSAEHEFK.

Mg(2+) is bound by residues Asp-45 and Asp-84. Residues 45-46, Asp-84, and Lys-112 contribute to the 3-methyl-2-oxobutanoate site; that span reads DS. Position 114 (Glu-114) interacts with Mg(2+). Glu-181 (proton acceptor) is an active-site residue.

Belongs to the PanB family. Homodecamer; pentamer of dimers. Requires Mg(2+) as cofactor.

It localises to the cytoplasm. It carries out the reaction 3-methyl-2-oxobutanoate + (6R)-5,10-methylene-5,6,7,8-tetrahydrofolate + H2O = 2-dehydropantoate + (6S)-5,6,7,8-tetrahydrofolate. It participates in cofactor biosynthesis; (R)-pantothenate biosynthesis; (R)-pantoate from 3-methyl-2-oxobutanoate: step 1/2. Its function is as follows. Catalyzes the reversible reaction in which hydroxymethyl group from 5,10-methylenetetrahydrofolate is transferred onto alpha-ketoisovalerate to form ketopantoate. In Pseudoalteromonas translucida (strain TAC 125), this protein is 3-methyl-2-oxobutanoate hydroxymethyltransferase.